We begin with the raw amino-acid sequence, 1110 residues long: cGMP-specific 3',5'-cyclic phosphodiesterase (1110 aa).

Composition is skewed to low complexity over residues 1-25 and 35-55; these read MTDVSAAAGGATAPAETAATSSSAS and TSTAMAAPTATPTTAATASGA. Disordered regions lie at residues 1 to 55, 67 to 128, and 184 to 203; these read MTDV…ASGA, ISNQ…QQDV, and ASPTVQQKSPRSLSNSSASS. The span at 88–103 shows a compositional bias: pro residues; that stretch reads APYPPVPAAKPKPTPT. Over residues 192-203 the composition is skewed to low complexity; that stretch reads SPRSLSNSSASS. GAF domains are found at residues 233-385 and 417-601; these read DIDV…GIGI and NLEC…GLGI. The region spanning 631 to 954 is the PDEase domain; that stretch reads SQDQTEKLTQ…RNWQDLAEKV (324 aa). Residue His-707 is the Proton donor of the active site. 4 residues coordinate a divalent metal cation: His-711, His-747, Asp-748, and Asp-858. 2 disordered regions span residues 997 to 1028 and 1040 to 1110; these read AQHGAGAGGDDSHTPEHQRSGSRLSMKKTGAL and LYNS…CSLL. Composition is skewed to basic and acidic residues over residues 1006-1015 and 1056-1068; these read DDSHTPEHQR and LESHVSEDMDDKS. The span at 1082-1097 shows a compositional bias: low complexity; that stretch reads GRMSASSSTSSAGTVV. The span at 1100–1110 shows a compositional bias: basic residues; that stretch reads SKKRSKLCSLL. Position 1107 is a cysteine methyl ester (Cys-1107). Cys-1107 is lipidated: S-farnesyl cysteine. Positions 1108 to 1110 are cleaved as a propeptide — removed in mature form; it reads SLL.

Belongs to the cyclic nucleotide phosphodiesterase family. Interacts with PrBP. A divalent metal cation serves as cofactor.

The protein localises to the cell membrane. It carries out the reaction 3',5'-cyclic GMP + H2O = GMP + H(+). Functionally, has a role regulating cGMP transport in Malpighian tubule principal cells. This is cGMP-specific 3',5'-cyclic phosphodiesterase from Drosophila pseudoobscura pseudoobscura (Fruit fly).